The sequence spans 467 residues: Xanthan biosynthesis protein XanB (467 aa).

This sequence belongs to the mannose-6-phosphate isomerase type 2 family.

It carries out the reaction D-mannose 6-phosphate = D-fructose 6-phosphate. It catalyses the reaction alpha-D-mannose 1-phosphate + GTP + H(+) = GDP-alpha-D-mannose + diphosphate. The protein operates within nucleotide-sugar biosynthesis; GDP-alpha-D-mannose biosynthesis; GDP-alpha-D-mannose from alpha-D-mannose 1-phosphate (GTP route): step 1/1. It functions in the pathway nucleotide-sugar biosynthesis; GDP-alpha-D-mannose biosynthesis; alpha-D-mannose 1-phosphate from D-fructose 6-phosphate: step 1/2. In terms of biological role, involved in xanthan production. The polypeptide is Xanthan biosynthesis protein XanB (xanB) (Xanthomonas campestris pv. campestris (strain B100)).